A 1244-amino-acid polypeptide reads, in one-letter code: Structural polyprotein (1244 aa).

The disordered stretch occupies residues 1–113 (MNSVFYNPFG…GKRQRTALKF (113 aa)). Residues 35–44 (GLTTQIQQLT) are compositionally biased toward polar residues. The tract at residues 35 to 69 (GLTTQIQQLTRAVRALVLDNATRRQRPAPRTRPRK) is host transcription inhibition. Residues 57–81 (RRQRPAPRTRPRKPKTQKPKPKKQN) show a composition bias toward basic residues. The Nuclear localization signal motif lies at 62–103 (APRTRPRKPKTQKPKPKKQNQKPPQQQKKGKNQPQQPKKPKP). Residues 82–97 (QKPPQQQKKGKNQPQQ) show a composition bias toward low complexity. Residues 85 to 118 (PQQQKKGKNQPQQPKKPKPGKRQRTALKFEADRT) form a binding to the viral RNA region. Over residues 99–109 (KKPKPGKRQRT) the composition is skewed to basic residues. Residues 103 to 117 (PGKRQRTALKFEADR) form a ribosome-binding region. One can recognise a Peptidase S3 domain in the interval 117–267 (RTFVGKNEDG…KTTHEDTVEW (151 aa)). The active-site Charge relay system is His-144. Positions 149–159 (IDHPALAKLKF) match the Nuclear export signal motif. Positions 160-165 (TKSSSY) are interaction with spike glycoprotein E2. Residue Asp-166 is the Charge relay system of the active site. A dimerization of the capsid protein region spans residues 188–198 (PEVFYNWHHGA). The active-site Charge relay system is Ser-218. The dimerization of the capsid protein stretch occupies residues 224–228 (DNSGK). An interaction with spike glycoprotein E2 region spans residues 252–256 (KKGAA). Positions 268-280 (SRAITAMCILQNV) are functions as an uncleaved signal peptide for the precursor of protein E3/E2. Topologically, residues 268–696 (SRAITAMCIL…HYYHLYPFYT (429 aa)) are extracellular. A glycan (N-linked (GlcNAc...) asparagine; by host) is linked at Asn-279. Cystine bridges form between Cys-284/Cys-290, Cys-481/Cys-595, Cys-530/Cys-555, and Cys-532/Cys-549. The N-linked (GlcNAc...) asparagine; by host glycan is linked to Asn-525. Asn-647 carries an N-linked (GlcNAc...) asparagine; by host glycan. The helical transmembrane segment at 697 to 717 (VTVLSGMGLAICAGLVISILC) threads the bilayer. The Cytoplasmic segment spans residues 718–751 (CCKARRDCLTPYQLAPNATVPFLVTLCCCFQRTS). Residues 720 to 724 (KARRD) form an interaction with the capsid protein region. S-palmitoyl cysteine; by host attachment occurs at residues Cys-725, Cys-745, and Cys-746. Cys-725 and Cys-746 are oxidised to a cystine. Topologically, residues 752 to 764 (ADEFTDTMGYLWQ) are extracellular. 2 helical membrane-spanning segments follow: residues 765 to 785 (HSQT…ITLV) and 786 to 805 (RCCS…NKAD). Topologically, residues 806-1218 (AYEHTITVPN…KTSWNWITAL (413 aa)) are extracellular. Disulfide bonds link Cys-855–Cys-920, Cys-868–Cys-900, Cys-869–Cys-902, and Cys-874–Cys-884. The E1 fusion peptide loop stretch occupies residues 890 to 907 (VYPFLWGGAQCFCDSENS). Asn-945 and Asn-1051 each carry an N-linked (GlcNAc...) asparagine; by host glycan. Disulfide bonds link Cys-1065–Cys-1077, Cys-1106–Cys-1181, Cys-1111–Cys-1185, and Cys-1133–Cys-1175. The chain crosses the membrane as a helical span at residues 1219-1239 (MGGISSIAAIAAIVLVIALVF). The Cytoplasmic segment spans residues 1240–1244 (TAQHR).

As to quaternary structure, homodimer. Homomultimer. Interacts with host karyopherin KPNA4; this interaction allows the nuclear import of the viral capsid protein. Interacts with spike glycoprotein E2. Interacts with host IRAK1; the interaction leads to inhibition of IRAK1-dependent signaling. In terms of assembly, the precursor of protein E3/E2 and E1 form a heterodimer shortly after synthesis. The precursor of protein E3/E2 and E1 form a heterodimer shortly after synthesis. Processing of the precursor of protein E3/E2 into E2 and E3 results in a heterodimer of the spike glycoproteins E2 and E1. Spike at virion surface are constituted of a trimer of E2-E1 heterodimers. After target cell attachment and endocytosis, E1 change conformation to form homotrimers. Interacts with 6K protein. As to quaternary structure, interacts with spike glycoprotein E1. Processing of the precursor of protein E3/E2 into E2 and E3 results in a heterodimer of the spike glycoproteins E2 and E1. Spike at virion surface are constituted of a trimer of E2-E1 heterodimers. Interacts with 6K protein. In terms of assembly, oligomer. Interacts with spike glycoprotein E1. Interacts with spike glycoprotein E2. Structural polyprotein: Specific enzymatic cleavages in vivo yield mature proteins. Capsid protein is auto-cleaved during polyprotein translation, unmasking a signal peptide at the N-terminus of the precursor of E3/E2. The remaining polyprotein is then targeted to the host endoplasmic reticulum, where host signal peptidase cleaves it into pE2, 6K and E1 proteins. pE2 is further processed to mature E3 and E2 by host furin in trans-Golgi vesicle. In terms of processing, palmitoylated via thioester bonds. These palmitoylations may induce disruption of the C-terminus transmembrane. This would result in the reorientation of E2 C-terminus from lumenal to cytoplasmic side. Post-translationally, N-glycosylated. Palmitoylated via thioester bonds.

The protein resides in the virion. Its subcellular location is the host cytoplasm. It localises to the host cell membrane. The protein localises to the host nucleus. It is found in the virion membrane. The protein resides in the host Golgi apparatus. Its subcellular location is the host trans-Golgi network. It localises to the host endoplasmic reticulum. The catalysed reaction is Autocatalytic release of the core protein from the N-terminus of the togavirus structural polyprotein by hydrolysis of a -Trp-|-Ser- bond.. Its function is as follows. Forms an icosahedral capsid with a T=4 symmetry composed of 240 copies of the capsid protein surrounded by a lipid membrane through which penetrate 80 spikes composed of trimers of E1-E2 heterodimers. The capsid protein binds to the viral RNA genome at a site adjacent to a ribosome binding site for viral genome translation following genome release. Possesses a protease activity that results in its autocatalytic cleavage from the nascent structural protein. Following its self-cleavage, the capsid protein transiently associates with ribosomes, and within several minutes the protein binds to viral RNA and rapidly assembles into icosahedric core particles. The resulting nucleocapsid eventually associates with the cytoplasmic domain of the spike glycoprotein E2 at the cell membrane, leading to budding and formation of mature virions. In case of infection, new virions attach to target cells and after clathrin-mediated endocytosis their membrane fuses with the host endosomal membrane. This leads to the release of the nucleocapsid into the cytoplasm, followed by an uncoating event necessary for the genomic RNA to become accessible. The uncoating might be triggered by the interaction of capsid proteins with ribosomes. Binding of ribosomes would release the genomic RNA since the same region is genomic RNA-binding and ribosome-binding. Specifically inhibits interleukin-1 receptor-associated kinase 1/IRAK1-dependent signaling during viral entry, representing a means by which the alphaviruses may evade innate immune detection and activation prior to viral gene expression. Provides the signal sequence for the translocation of the precursor of protein E3/E2 to the host endoplasmic reticulum. Furin-cleaved E3 remains associated with spike glycoprotein E1 and mediates pH protection of the latter during the transport via the secretory pathway. After virion release from the host cell, the assembly protein E3 is gradually released in the extracellular space. Functionally, plays a role in viral attachment to target host cell, by binding to the cell receptor. Synthesized as a p62 precursor which is processed by furin at the cell membrane just before virion budding, giving rise to E2-E1 heterodimer. The p62-E1 heterodimer is stable, whereas E2-E1 is unstable and dissociate at low pH. p62 is processed at the last step, presumably to avoid E1 fusion activation before its final export to cell surface. E2 C-terminus contains a transitory transmembrane that would be disrupted by palmitoylation, resulting in reorientation of the C-terminal tail from lumenal to cytoplasmic side. This step is critical since E2 C-terminus is involved in budding by interacting with capsid proteins. This release of E2 C-terminus in cytoplasm occurs lately in protein export, and precludes premature assembly of particles at the endoplasmic reticulum membrane. In terms of biological role, acts as a viroporin that participates in virus glycoprotein processing and transport to the plasma membrane, cell permeabilization and budding of viral particles. Disrupts the calcium homeostasis of the cell, probably at the endoplasmic reticulum level. This leads to cytoplasmic calcium elevation. Because of its lipophilic properties, the 6K protein is postulated to influence the selection of lipids that interact with the transmembrane domains of the glycoproteins, which, in turn, affects the deformability of the bilayer required for the extreme curvature that occurs as budding proceeds. Present in low amount in virions, about 3% compared to viral glycoproteins. Its function is as follows. Class II viral fusion protein. Fusion activity is inactive as long as E1 is bound to E2 in mature virion. After virus attachment to target cell and endocytosis, acidification of the endosome induce dissociation of E1/E2 heterodimer and concomitant trimerization of the E1 subunits. This E1 trimer is fusion active, and promotes release of viral nucleocapsid in cytoplasm after endosome and viral membrane fusion. Efficient fusion requires the presence of cholesterol and sphingolipid in the target membrane. The polypeptide is Structural polyprotein (Aedes (AURAV)).